The primary structure comprises 500 residues: UDP-GalNAc:beta-1,3-N-acetylgalactosaminyltransferase 2 (500 aa).

At 1–6 (MRNWLV) the chain is on the cytoplasmic side. A helical; Signal-anchor for type II membrane protein transmembrane segment spans residues 7-23 (LLCPCVLGAALHLWLRL). The Lumenal portion of the chain corresponds to 24-500 (RSPPPACASG…CGDPCRCQAR (477 aa)). Residues asparagine 116 and asparagine 174 are each glycosylated (N-linked (GlcNAc...) asparagine).

Belongs to the glycosyltransferase 31 family. Post-translationally, N-glycosylated. In terms of tissue distribution, expressed in all tissues examined, but at highest levels in testis, adipose tissue, skeletal muscle and ovary.

The protein resides in the golgi apparatus membrane. Its subcellular location is the endoplasmic reticulum. It catalyses the reaction 3-O-(N-acetyl-beta-D-glucosaminyl-(1-&gt;4)-alpha-D-mannosyl)-L-threonyl-[protein] + UDP-N-acetyl-alpha-D-galactosamine = 3-O-[beta-D-GalNAc-(1-&gt;3)-beta-D-GlcNAc-(1-&gt;4)-alpha-D-Man]-L-Thr-[protein] + UDP + H(+). It participates in protein modification; protein glycosylation. Its function is as follows. Beta-1,3-N-acetylgalactosaminyltransferase that synthesizes a unique carbohydrate structure, GalNAc-beta-1-3GlcNAc, on N- and O-glycans. Has no galactose nor galactosaminyl transferase activity toward any acceptor substrate. Involved in alpha-dystroglycan (DAG1) glycosylation: acts coordinately with GTDC2/POMGnT2 to synthesize a GalNAc-beta3-GlcNAc-beta-terminus at the 4-position of protein O-mannose in the biosynthesis of the phosphorylated O-mannosyl trisaccharide (N-acetylgalactosamine-beta-3-N-acetylglucosamine-beta-4-(phosphate-6-)mannose), a carbohydrate structure present in alpha-dystroglycan, which is required for binding laminin G-like domain-containing extracellular proteins with high affinity. In Homo sapiens (Human), this protein is UDP-GalNAc:beta-1,3-N-acetylgalactosaminyltransferase 2 (B3GALNT2).